Reading from the N-terminus, the 671-residue chain is DNA ligase (671 aa).

NAD(+)-binding positions include 32–36 (DAEYD), 81–82 (SL), and glutamate 113. The N6-AMP-lysine intermediate role is filled by lysine 115. Arginine 136, glutamate 173, lysine 290, and lysine 314 together coordinate NAD(+). Positions 408, 411, 426, and 432 each coordinate Zn(2+). Residues 593 to 671 (EIDSPFAGKT…EAEMIRLLGA (79 aa)) enclose the BRCT domain.

This sequence belongs to the NAD-dependent DNA ligase family. LigA subfamily. Mg(2+) is required as a cofactor. It depends on Mn(2+) as a cofactor.

The enzyme catalyses NAD(+) + (deoxyribonucleotide)n-3'-hydroxyl + 5'-phospho-(deoxyribonucleotide)m = (deoxyribonucleotide)n+m + AMP + beta-nicotinamide D-nucleotide.. Its function is as follows. DNA ligase that catalyzes the formation of phosphodiester linkages between 5'-phosphoryl and 3'-hydroxyl groups in double-stranded DNA using NAD as a coenzyme and as the energy source for the reaction. It is essential for DNA replication and repair of damaged DNA. In Salmonella newport (strain SL254), this protein is DNA ligase.